Consider the following 844-residue polypeptide: Saxiphilin (844 aa).

The first 19 residues, 1 to 19 (MAPTFQTALFFTIISLSFA), serve as a signal peptide directing secretion. Positions 26 to 106 (VRWCAISDLE…IAEPYSSNRD (81 aa)) constitute a Transferrin-like 1; first part domain. Intrachain disulfides connect Cys29-Cys64, Cys39-Cys55, Cys110-Cys130, Cys141-Cys148, Cys150-Cys172, Cys180-Cys202, Cys222-Cys244, Cys277-Cys360, Cys322-Cys335, Cys332-Cys343, Cys388-Cys402, Cys495-Cys527, Cys505-Cys518, Cys552-Cys839, Cys570-Cys799, Cys607-Cys685, Cys641-Cys655, Cys652-Cys668, and Cys725-Cys739. Thyroglobulin type-1 domains follow at residues 107-172 (LQKC…RATC) and 177-244 (LPKC…PATC). Residues 109 to 249 (KCLKERQQAL…IPATCQKHDL (141 aa)) are absent in transferrins. One can recognise a Transferrin-like 1; second part domain in the interval 245 to 482 (QKHDLVTTCH…LFHAMKALTG (238 aa)). The Transferrin-like 2 domain occupies 492–828 (VRWCTINKLE…YYTTVYGASR (337 aa)).

It belongs to the transferrin family. As to quaternary structure, monomer. As to expression, plasma. Highest levels of transcripts found in the liver, the lung, the pancreas and the brain.

It is found in the secreted. In terms of biological role, binds specifically to the neurotoxin saxitoxin. Its physiological role may be to transport or sequester an endogenous organic molecule other than Fe(3+). It may participate in a detoxification mechanism for neutralizing a microbial toxin. The sequence is that of Saxiphilin from Aquarana catesbeiana (American bullfrog).